Consider the following 383-residue polypeptide: MTLPVWVAAAARAATEALLGRPFSASQLLELPDRDEPLAVSVTSAAVLAGGEQALAISHCDPGSGLDLTRGLEIWVCVQWQELVDDELNVHSEAWLNLLAGKGVGTLGSGGEACVSRFARELLSRNLYPLVPSGRGLQLEVVLPRGRDLAARTSNAAFGVVDGLALIGTQADVQVSASPDQLQQTIEQLRRQSAASDFCGAMTLVIGENGLDLARQLGLAAQPLLKIGNWLGPVIVAAAEAGVEQLLLLGYHGKLVKLAGGIFHTHHHLADGRLEVLAAMAVREGLPLDLIRQLGQADSMEAALKMLEAQDPELVRKLWYRLAVTVEHRSAAYLARYGSWSIAIGAALFDRQRRLRWAGPQGSQQLAVLGVTPEDSPISLSLP.

The protein belongs to the CbiD family.

The enzyme catalyses Co-precorrin-5B + S-adenosyl-L-methionine = Co-precorrin-6A + S-adenosyl-L-homocysteine. Its pathway is cofactor biosynthesis; adenosylcobalamin biosynthesis; cob(II)yrinate a,c-diamide from sirohydrochlorin (anaerobic route): step 6/10. Functionally, catalyzes the methylation of C-1 in cobalt-precorrin-5B to form cobalt-precorrin-6A. This chain is Cobalt-precorrin-5B C(1)-methyltransferase, found in Prochlorococcus marinus (strain MIT 9313).